The sequence spans 456 residues: Esterase MT1326 (456 aa).

LysM domains follow at residues 3–50 (STHA…RLIM), 54–101 (TRYT…RLIM), and 105–152 (TRYT…VLVI). Active-site residues include Ser294, Asp391, and His425.

This sequence belongs to the AB hydrolase superfamily.

The protein localises to the secreted. It localises to the cell wall. It carries out the reaction a fatty acid ester + H2O = an aliphatic alcohol + a fatty acid + H(+). Functionally, exhibits lipolytic activity with medium chain length esters as optimum substrates. The sequence is that of Esterase MT1326 from Mycobacterium tuberculosis (strain CDC 1551 / Oshkosh).